The primary structure comprises 481 residues: N-succinylglutamate 5-semialdehyde dehydrogenase (481 aa).

206–211 (GSARTG) provides a ligand contact to NAD(+). Residues Glu-229 and Cys-263 contribute to the active site.

It belongs to the aldehyde dehydrogenase family. AstD subfamily.

It catalyses the reaction N-succinyl-L-glutamate 5-semialdehyde + NAD(+) + H2O = N-succinyl-L-glutamate + NADH + 2 H(+). It functions in the pathway amino-acid degradation; L-arginine degradation via AST pathway; L-glutamate and succinate from L-arginine: step 4/5. Its function is as follows. Catalyzes the NAD-dependent reduction of succinylglutamate semialdehyde into succinylglutamate. This is N-succinylglutamate 5-semialdehyde dehydrogenase from Sphingopyxis alaskensis (strain DSM 13593 / LMG 18877 / RB2256) (Sphingomonas alaskensis).